A 143-amino-acid chain; its full sequence is Large ribosomal subunit protein uL13 (143 aa).

The protein belongs to the universal ribosomal protein uL13 family. In terms of assembly, part of the 50S ribosomal subunit.

This protein is one of the early assembly proteins of the 50S ribosomal subunit, although it is not seen to bind rRNA by itself. It is important during the early stages of 50S assembly. This Variovorax paradoxus (strain S110) protein is Large ribosomal subunit protein uL13.